Here is a 327-residue protein sequence, read N- to C-terminus: Ferrochelatase (327 aa).

Fe cation is bound by residues His196 and Glu277.

Belongs to the ferrochelatase family.

The protein resides in the cytoplasm. It catalyses the reaction heme b + 2 H(+) = protoporphyrin IX + Fe(2+). The protein operates within porphyrin-containing compound metabolism; protoheme biosynthesis; protoheme from protoporphyrin-IX: step 1/1. Catalyzes the ferrous insertion into protoporphyrin IX. This Gloeobacter violaceus (strain ATCC 29082 / PCC 7421) protein is Ferrochelatase.